The following is a 450-amino-acid chain: Folate synthesis bifunctional protein (450 aa).

The tract at residues 1–166 (MTTWNFVCLG…TFAELAAIYP (166 aa)) is HPPK. In terms of domain architecture, Pterin-binding spans 180-441 (TQIMGIVNVT…QVEGNRRVLA (262 aa)). The DHPS stretch occupies residues 182–450 (IMGIVNVTDD…AAAAWSGMPV (269 aa)). Asparagine 187 is a Mg(2+) binding site. (7,8-dihydropterin-6-yl)methyl diphosphate is bound by residues threonine 227, aspartate 267, asparagine 287, aspartate 358, lysine 395, and 429-431 (RVH).

The protein in the C-terminal section; belongs to the DHPS family. In the N-terminal section; belongs to the HPPK family. Requires Mg(2+) as cofactor.

It carries out the reaction 6-hydroxymethyl-7,8-dihydropterin + ATP = (7,8-dihydropterin-6-yl)methyl diphosphate + AMP + H(+). The enzyme catalyses (7,8-dihydropterin-6-yl)methyl diphosphate + 4-aminobenzoate = 7,8-dihydropteroate + diphosphate. Its pathway is cofactor biosynthesis; tetrahydrofolate biosynthesis; 2-amino-4-hydroxy-6-hydroxymethyl-7,8-dihydropteridine diphosphate from 7,8-dihydroneopterin triphosphate: step 4/4. It functions in the pathway cofactor biosynthesis; tetrahydrofolate biosynthesis; 7,8-dihydrofolate from 2-amino-4-hydroxy-6-hydroxymethyl-7,8-dihydropteridine diphosphate and 4-aminobenzoate: step 1/2. The sequence is that of Folate synthesis bifunctional protein (folKP) from Chlamydia muridarum (strain MoPn / Nigg).